Here is a 59-residue protein sequence, read N- to C-terminus: MAVQQNKKSPSKRGMHRAHDFLTTPPLAVESTTGEAHLRHHISPAGFYRGKKVTKGKGE.

Residues 1–59 (MAVQQNKKSPSKRGMHRAHDFLTTPPLAVESTTGEAHLRHHISPAGFYRGKKVTKGKGE) are disordered. Residues 49–59 (RGKKVTKGKGE) show a composition bias toward basic residues.

Belongs to the bacterial ribosomal protein bL32 family.

This is Large ribosomal subunit protein bL32 from Dechloromonas aromatica (strain RCB).